The following is a 323-amino-acid chain: Peroxidase 16 (323 aa).

An N-terminal signal peptide occupies residues methionine 1–alanine 23. Cystine bridges form between cysteine 34/cysteine 113, cysteine 67/cysteine 72, cysteine 119/cysteine 319, and cysteine 198/cysteine 230. Residue histidine 65 is the Proton acceptor of the active site. Ca(2+) is bound by residues aspartate 66, valine 69, glycine 71, aspartate 73, and serine 75. Proline 161 is a binding site for substrate. Histidine 191 contributes to the heme b binding site. Position 192 (threonine 192) interacts with Ca(2+). Residues aspartate 243, serine 246, and aspartate 251 each contribute to the Ca(2+) site.

It belongs to the peroxidase family. Classical plant (class III) peroxidase subfamily. Heme b serves as cofactor. Ca(2+) is required as a cofactor. As to expression, expressed in the whole plant, but preferentially in roots and leaves.

The protein resides in the secreted. It carries out the reaction 2 a phenolic donor + H2O2 = 2 a phenolic radical donor + 2 H2O. Functionally, removal of H(2)O(2), oxidation of toxic reductants, biosynthesis and degradation of lignin, suberization, auxin catabolism, response to environmental stresses such as wounding, pathogen attack and oxidative stress. These functions might be dependent on each isozyme/isoform in each plant tissue. The sequence is that of Peroxidase 16 (PER16) from Arabidopsis thaliana (Mouse-ear cress).